The primary structure comprises 128 residues: Ribosome-binding factor A (128 aa).

The protein belongs to the RbfA family. Monomer. Binds 30S ribosomal subunits, but not 50S ribosomal subunits or 70S ribosomes.

The protein localises to the cytoplasm. Functionally, one of several proteins that assist in the late maturation steps of the functional core of the 30S ribosomal subunit. Associates with free 30S ribosomal subunits (but not with 30S subunits that are part of 70S ribosomes or polysomes). Required for efficient processing of 16S rRNA. May interact with the 5'-terminal helix region of 16S rRNA. The chain is Ribosome-binding factor A from Geobacillus thermodenitrificans (strain NG80-2).